Consider the following 146-residue polypeptide: MGFTQQQEALVNSSWESFKQNPSYSVLFYTIILEKAPAAKGMFSFLKDSAGVVDSPKLQAHAEQVFGMVRDSAIQLQATGEVVLKNGSLGAIHIQKGVVDPHFVVVKEALLKTIKEASGDKWSEELSIAWEVAYDGLATAIKKAMS.

The region spanning 2–146 (GFTQQQEALV…LATAIKKAMS (145 aa)) is the Globin domain. Tyrosine 24 and tyrosine 29 each carry nitrated tyrosine. Serine 44 serves as a coordination point for heme b. Position 44 is a phosphoserine (serine 44). Residue histidine 61 coordinates O2. Heme b contacts are provided by histidine 93 and lysine 96. Residue tyrosine 134 is modified to Nitrated tyrosine.

The protein belongs to the plant globin family. Monomer. In terms of processing, nitrated in effective nodules and particularly in hypoxic conditions; this mechanism may play a protective role in the symbiosis by buffering toxic peroxynitrite NO(2)(-). Nitration level decrease during nodule senescence. Post-translationally, phosphorylation at Ser-44 disrupts the molecular environment of its porphyrin ring oxygen binding pocket, thus leading to a reduced oxygen consumption and to the delivery of oxygen O(2) to symbiosomes. As to expression, accumulates in root nodules after inoculation by bacteria of the genus Rhizobium.

It localises to the cytoplasm. The protein resides in the cytosol. It is found in the nucleus. Leghemoglobin that reversibly binds oxygen O(2) through a pentacoordinated heme iron. In root nodules, facilitates the diffusion of oxygen to the bacteroids while preventing the bacterial nitrogenase from being inactivated by buffering dioxygen, nitric oxide and carbon monoxide, and promoting the formation of reactive oxygen species (ROS, e.g. H(2)O(2)). This role is essential for symbiotic nitrogen fixation (SNF). This Vicia faba (Broad bean) protein is Leghemoglobin 49.